The primary structure comprises 506 residues: Glutamate--tRNA ligase (506 aa).

A 'HIGH' region motif is present at residues 23–33 (PSPTGTPHVGL). The short motif at 267-271 (KLSKR) is the 'KMSKS' region element. ATP is bound at residue K270.

This sequence belongs to the class-I aminoacyl-tRNA synthetase family. Glutamate--tRNA ligase type 1 subfamily. In terms of assembly, monomer.

Its subcellular location is the cytoplasm. The catalysed reaction is tRNA(Glu) + L-glutamate + ATP = L-glutamyl-tRNA(Glu) + AMP + diphosphate. Catalyzes the attachment of glutamate to tRNA(Glu) in a two-step reaction: glutamate is first activated by ATP to form Glu-AMP and then transferred to the acceptor end of tRNA(Glu). In Clavibacter michiganensis subsp. michiganensis (strain NCPPB 382), this protein is Glutamate--tRNA ligase.